The sequence spans 172 residues: Adenine phosphoribosyltransferase (172 aa).

Belongs to the purine/pyrimidine phosphoribosyltransferase family. Homodimer.

The protein resides in the cytoplasm. It catalyses the reaction AMP + diphosphate = 5-phospho-alpha-D-ribose 1-diphosphate + adenine. The protein operates within purine metabolism; AMP biosynthesis via salvage pathway; AMP from adenine: step 1/1. Functionally, catalyzes a salvage reaction resulting in the formation of AMP, that is energically less costly than de novo synthesis. The sequence is that of Adenine phosphoribosyltransferase from Clostridium beijerinckii (strain ATCC 51743 / NCIMB 8052) (Clostridium acetobutylicum).